The following is a 221-amino-acid chain: ATP phosphoribosyltransferase (221 aa).

It belongs to the ATP phosphoribosyltransferase family. Short subfamily. Heteromultimer composed of HisG and HisZ subunits.

The protein localises to the cytoplasm. It carries out the reaction 1-(5-phospho-beta-D-ribosyl)-ATP + diphosphate = 5-phospho-alpha-D-ribose 1-diphosphate + ATP. The protein operates within amino-acid biosynthesis; L-histidine biosynthesis; L-histidine from 5-phospho-alpha-D-ribose 1-diphosphate: step 1/9. Its function is as follows. Catalyzes the condensation of ATP and 5-phosphoribose 1-diphosphate to form N'-(5'-phosphoribosyl)-ATP (PR-ATP). Has a crucial role in the pathway because the rate of histidine biosynthesis seems to be controlled primarily by regulation of HisG enzymatic activity. In Rhizorhabdus wittichii (strain DSM 6014 / CCUG 31198 / JCM 15750 / NBRC 105917 / EY 4224 / RW1) (Sphingomonas wittichii), this protein is ATP phosphoribosyltransferase.